The chain runs to 443 residues: UDP-N-acetylmuramate--L-alanine ligase (443 aa).

110-116 is a binding site for ATP; sequence GAHGKTS.

This sequence belongs to the MurCDEF family.

The protein resides in the cytoplasm. The enzyme catalyses UDP-N-acetyl-alpha-D-muramate + L-alanine + ATP = UDP-N-acetyl-alpha-D-muramoyl-L-alanine + ADP + phosphate + H(+). Its pathway is cell wall biogenesis; peptidoglycan biosynthesis. Its function is as follows. Cell wall formation. In Streptococcus equi subsp. zooepidemicus (strain H70), this protein is UDP-N-acetylmuramate--L-alanine ligase.